The chain runs to 800 residues: Cation/H(+) antiporter 19 (800 aa).

A run of 12 helical transmembrane segments spans residues 30 to 50, 60 to 77, 92 to 112, 127 to 147, 158 to 178, 196 to 216, 224 to 244, 278 to 298, 315 to 335, 343 to 363, 375 to 395, and 408 to 428; these read FALP…RLLA, RVIA…SALG, LTVL…LVGL, LLIA…TSFV, QLPF…PVLA, MSAA…AIAL, LVSV…VVAI, FVTD…GIVA, LVSG…TDVT, WGLL…GTVG, AVTL…VLNI, and AILV…VMLI. Residues 776 to 800 form a disordered region; the sequence is ADTRPLVEEDAEYDQSSRDISDLTA. Residues 790-800 show a composition bias toward basic and acidic residues; the sequence is QSSRDISDLTA.

Belongs to the monovalent cation:proton antiporter 2 (CPA2) transporter (TC 2.A.37) family. CHX (TC 2.A.37.4) subfamily. As to expression, expressed in the whole plant but preferentially in pollen.

The protein resides in the membrane. Its function is as follows. May operate as a cation/H(+) antiporter. The chain is Cation/H(+) antiporter 19 (CHX19) from Arabidopsis thaliana (Mouse-ear cress).